We begin with the raw amino-acid sequence, 320 residues long: MTTPFKMERGVKYRDAAKTSIIPVKNIDPNQELLKKPEWMKIKLPANSAKINSIKNGMRRHGLHSVCEEASCPNLHECFNHGTATFMILGAICTRRCPFCDVAHGKPLPPDPDEPKKLAETIQDMKLRYVVITSVDRDDLPDRGAGHFAECVKEIRKLNPGIKIEILVPDFRGRIEQALEKLKDNPPDVFNHNLENVPRLYREIRPGADYNWSLKLLKEFKTIFPHIPTKSGIMVGLGETNEEILQVMQDLRDNGVTMLTLGQYLQPSRHHLPVARYVPPEEFDDFRDKAEKMGFEHAACGPFVRSSYHADLQASGGLVK.

The [4Fe-4S] cluster site is built by Cys-67, Cys-72, Cys-78, Cys-93, Cys-97, Cys-100, and Ser-307. The 218-residue stretch at 79–296 (FNHGTATFMI…RDKAEKMGFE (218 aa)) folds into the Radical SAM core domain.

It belongs to the radical SAM superfamily. Lipoyl synthase family. It depends on [4Fe-4S] cluster as a cofactor.

The protein resides in the cytoplasm. It carries out the reaction [[Fe-S] cluster scaffold protein carrying a second [4Fe-4S](2+) cluster] + N(6)-octanoyl-L-lysyl-[protein] + 2 oxidized [2Fe-2S]-[ferredoxin] + 2 S-adenosyl-L-methionine + 4 H(+) = [[Fe-S] cluster scaffold protein] + N(6)-[(R)-dihydrolipoyl]-L-lysyl-[protein] + 4 Fe(3+) + 2 hydrogen sulfide + 2 5'-deoxyadenosine + 2 L-methionine + 2 reduced [2Fe-2S]-[ferredoxin]. Its pathway is protein modification; protein lipoylation via endogenous pathway; protein N(6)-(lipoyl)lysine from octanoyl-[acyl-carrier-protein]: step 2/2. Its function is as follows. Catalyzes the radical-mediated insertion of two sulfur atoms into the C-6 and C-8 positions of the octanoyl moiety bound to the lipoyl domains of lipoate-dependent enzymes, thereby converting the octanoylated domains into lipoylated derivatives. The polypeptide is Lipoyl synthase (Histophilus somni (strain 129Pt) (Haemophilus somnus)).